The primary structure comprises 144 residues: Large ribosomal subunit protein uL16 (144 aa).

Over residues 1-14 (MLMPKRVKYRKPHR) the composition is skewed to basic residues. Residues 1 to 25 (MLMPKRVKYRKPHRPGTQGKATRGN) are disordered.

It belongs to the universal ribosomal protein uL16 family. Part of the 50S ribosomal subunit.

In terms of biological role, binds 23S rRNA and is also seen to make contacts with the A and possibly P site tRNAs. This Moorella thermoacetica (strain ATCC 39073 / JCM 9320) protein is Large ribosomal subunit protein uL16.